Here is a 204-residue protein sequence, read N- to C-terminus: Synaptosomal-associated protein 25-A (204 aa).

Basic and acidic residues predominate over residues 1–11 (MAEDADMRNEL). Residues 1-25 (MAEDADMRNELSDMQQRADQLADES) are disordered. T-SNARE coiled-coil homology domains are found at residues 19-81 (DQLA…LNDL) and 138-200 (DARE…ATKM).

Belongs to the SNAP-25 family.

The protein localises to the synapse. Its subcellular location is the synaptosome. The protein resides in the cell membrane. Its function is as follows. May play an important role in the synaptic function of specific neuronal systems. Associates with proteins involved in vesicle docking and membrane fusion. The sequence is that of Synaptosomal-associated protein 25-A (snap25a) from Carassius auratus (Goldfish).